The following is a 502-amino-acid chain: Chromosomal replication initiator protein DnaA (502 aa).

Positions 1–112 (MADDLSLGFT…PSTDHIDDNS (112 aa)) are domain I, interacts with DnaA modulators. The tract at residues 113–161 (SSADVLLTDDCGTDTDENYGEPLTGEYQGLPTYFTERPHHTESTVTGGT) is domain II. Residues 162-378 (SLNRRYTFET…GALIRVTAFA (217 aa)) form a domain III, AAA+ region region. ATP contacts are provided by Gly-206, Gly-208, Lys-209, and Thr-210. The tract at residues 379–502 (SLNKTAIDKA…TTRIRQRSKR (124 aa)) is domain IV, binds dsDNA.

It belongs to the DnaA family. Oligomerizes as a right-handed, spiral filament on DNA at oriC.

The protein resides in the cytoplasm. In terms of biological role, plays an essential role in the initiation and regulation of chromosomal replication. ATP-DnaA binds to the origin of replication (oriC) to initiate formation of the DNA replication initiation complex once per cell cycle. Binds the DnaA box (a 9 base pair repeat at the origin) and separates the double-stranded (ds)DNA. Forms a right-handed helical filament on oriC DNA; dsDNA binds to the exterior of the filament while single-stranded (ss)DNA is stabiized in the filament's interior. The ATP-DnaA-oriC complex binds and stabilizes one strand of the AT-rich DNA unwinding element (DUE), permitting loading of DNA polymerase. After initiation quickly degrades to an ADP-DnaA complex that is not apt for DNA replication. Binds acidic phospholipids. The polypeptide is Chromosomal replication initiator protein DnaA (Mycobacterium leprae (strain TN)).